The chain runs to 104 residues: Large ribosomal subunit protein bL21 (104 aa).

It belongs to the bacterial ribosomal protein bL21 family. Part of the 50S ribosomal subunit. Contacts protein L20.

Functionally, this protein binds to 23S rRNA in the presence of protein L20. The protein is Large ribosomal subunit protein bL21 of Opitutus terrae (strain DSM 11246 / JCM 15787 / PB90-1).